A 660-amino-acid chain; its full sequence is Acetyl-coenzyme A synthetase (660 aa).

CoA contacts are provided by residues 197–200 (RGGK) and Thr-317. Residues 397 to 399 (GEP), 421 to 426 (DTWWQT), Asp-512, and Arg-528 each bind ATP. Ser-536 contacts CoA. Arg-539 lines the ATP pocket. The Mg(2+) site is built by Val-550, His-552, and Val-555. N6-acetyllysine is present on Lys-625.

Belongs to the ATP-dependent AMP-binding enzyme family. It depends on Mg(2+) as a cofactor. Acetylated. Deacetylation by the SIR2-homolog deacetylase activates the enzyme.

The catalysed reaction is acetate + ATP + CoA = acetyl-CoA + AMP + diphosphate. Functionally, catalyzes the conversion of acetate into acetyl-CoA (AcCoA), an essential intermediate at the junction of anabolic and catabolic pathways. AcsA undergoes a two-step reaction. In the first half reaction, AcsA combines acetate with ATP to form acetyl-adenylate (AcAMP) intermediate. In the second half reaction, it can then transfer the acetyl group from AcAMP to the sulfhydryl group of CoA, forming the product AcCoA. The chain is Acetyl-coenzyme A synthetase from Burkholderia thailandensis (strain ATCC 700388 / DSM 13276 / CCUG 48851 / CIP 106301 / E264).